Consider the following 302-residue polypeptide: Oxygen-dependent coproporphyrinogen-III oxidase (302 aa).

Ser94 is a binding site for substrate. Residues His98 and His108 each contribute to the a divalent metal cation site. His108 functions as the Proton donor in the catalytic mechanism. 110–112 lines the substrate pocket; it reads NVR. 2 residues coordinate a divalent metal cation: His147 and His177. The interval 242-277 is important for dimerization; that stretch reads YVEFNLVYDRGTLFGLQTGGRTESILMSMPPLARWE. 260 to 262 contacts substrate; that stretch reads GGR.

It belongs to the aerobic coproporphyrinogen-III oxidase family. In terms of assembly, homodimer. A divalent metal cation serves as cofactor.

The protein resides in the cytoplasm. The enzyme catalyses coproporphyrinogen III + O2 + 2 H(+) = protoporphyrinogen IX + 2 CO2 + 2 H2O. It participates in porphyrin-containing compound metabolism; protoporphyrin-IX biosynthesis; protoporphyrinogen-IX from coproporphyrinogen-III (O2 route): step 1/1. Involved in the heme biosynthesis. Catalyzes the aerobic oxidative decarboxylation of propionate groups of rings A and B of coproporphyrinogen-III to yield the vinyl groups in protoporphyrinogen-IX. This chain is Oxygen-dependent coproporphyrinogen-III oxidase, found in Aeromonas hydrophila subsp. hydrophila (strain ATCC 7966 / DSM 30187 / BCRC 13018 / CCUG 14551 / JCM 1027 / KCTC 2358 / NCIMB 9240 / NCTC 8049).